A 379-amino-acid chain; its full sequence is Chaperone protein DnaJ (379 aa).

Positions 5-70 (DYYEVLGVGK…EKKAAYDQYG (66 aa)) constitute a J domain. The segment at 139–217 (GHEAQIRVPH…CHGQGKLKSQ (79 aa)) adopts a CR-type zinc-finger fold. Zn(2+) contacts are provided by C152, C155, C169, C172, C191, C194, C205, and C208. 4 CXXCXGXG motif repeats span residues 152–159 (CDHCHGNG), 169–176 (CPTCHGAG), 191–198 (CPKCHGSG), and 205–212 (CTKCHGQG). Residues 356-379 (VHEGGSRHSPQEQSWLDKVKSFFS) are disordered.

The protein belongs to the DnaJ family. Homodimer. It depends on Zn(2+) as a cofactor.

The protein localises to the cytoplasm. In terms of biological role, participates actively in the response to hyperosmotic and heat shock by preventing the aggregation of stress-denatured proteins and by disaggregating proteins, also in an autonomous, DnaK-independent fashion. Unfolded proteins bind initially to DnaJ; upon interaction with the DnaJ-bound protein, DnaK hydrolyzes its bound ATP, resulting in the formation of a stable complex. GrpE releases ADP from DnaK; ATP binding to DnaK triggers the release of the substrate protein, thus completing the reaction cycle. Several rounds of ATP-dependent interactions between DnaJ, DnaK and GrpE are required for fully efficient folding. Also involved, together with DnaK and GrpE, in the DNA replication of plasmids through activation of initiation proteins. The chain is Chaperone protein DnaJ from Cupriavidus pinatubonensis (strain JMP 134 / LMG 1197) (Cupriavidus necator (strain JMP 134)).